The primary structure comprises 990 residues: Pentatricopeptide repeat-containing protein At4g33170 (990 aa).

20 PPR repeats span residues 73–107 (ERFL…DLVS), 109–139 (NSIL…LRQD), 144–178 (SRMT…GLDG), 179–209 (DEFV…MPYR), 210–244 (DVVL…GLNP), 279–313 (EIIF…DVEC), 314–348 (DQVT…GLDL), 349–379 (MLTV…MSER), 380–414 (DLIS…GLKP), 415–450 (DQYT…NNVS), 451–477 (DSFV…LFER), 481–515 (DLVA…GERS), 516–550 (DDFT…GYDL), 551–581 (DLWV…IPVP), 582–616 (DDVA…GVLP), 617–651 (DEFT…NCTN), 652–682 (DPFV…IEMM), 683–717 (NITA…GIKP), 718–753 (DKVT…GIKP), and 754–788 (EIEH…ASAS). Residues 789-864 (MYRTLLAACR…DPGFSWIEVK (76 aa)) are type E motif. The interval 865–895 (NKIHIFVVDDRSNRQTELIYRKVKDMIRDIK) is type E(+) motif. The tract at residues 896-990 (QEGYVPETDF…DGICSCGDYW (95 aa)) is type DYW motif.

Belongs to the PPR family. PCMP-H subfamily.

This chain is Pentatricopeptide repeat-containing protein At4g33170 (PCMP-H53), found in Arabidopsis thaliana (Mouse-ear cress).